A 787-amino-acid polypeptide reads, in one-letter code: LPS-assembly protein LptD (787 aa).

The N-terminal stretch at 1 to 39 (MPPKTLFPLVPACDAAPRKKRLAVALLAVPGLVPAVSQA) is a signal peptide.

Belongs to the LptD family. In terms of assembly, component of the lipopolysaccharide transport and assembly complex. Interacts with LptE and LptA.

Its subcellular location is the cell outer membrane. Its function is as follows. Together with LptE, is involved in the assembly of lipopolysaccharide (LPS) at the surface of the outer membrane. The protein is LPS-assembly protein LptD of Burkholderia pseudomallei (strain 1710b).